We begin with the raw amino-acid sequence, 363 residues long: 3-isopropylmalate dehydrogenase (363 aa).

78–91 (GPKWENLPPESQPE) provides a ligand contact to NAD(+). 4 residues coordinate substrate: R99, R109, R138, and D227. Residues D227, D251, and D255 each coordinate Mg(2+). Residue 285-297 (GSAPDIAGKNIAN) coordinates NAD(+).

This sequence belongs to the isocitrate and isopropylmalate dehydrogenases family. LeuB type 1 subfamily. As to quaternary structure, homodimer. Mg(2+) is required as a cofactor. Requires Mn(2+) as cofactor.

It is found in the cytoplasm. The enzyme catalyses (2R,3S)-3-isopropylmalate + NAD(+) = 4-methyl-2-oxopentanoate + CO2 + NADH. Its pathway is amino-acid biosynthesis; L-leucine biosynthesis; L-leucine from 3-methyl-2-oxobutanoate: step 3/4. Functionally, catalyzes the oxidation of 3-carboxy-2-hydroxy-4-methylpentanoate (3-isopropylmalate) to 3-carboxy-4-methyl-2-oxopentanoate. The product decarboxylates to 4-methyl-2 oxopentanoate. The protein is 3-isopropylmalate dehydrogenase of Salmonella paratyphi A (strain ATCC 9150 / SARB42).